Consider the following 334-residue polypeptide: Glyceraldehyde-3-phosphate dehydrogenase (334 aa).

Residues 10 to 11, aspartate 33, lysine 77, and threonine 119 contribute to the NAD(+) site; that span reads RI. Residues 149-151, threonine 180, 209-210, and arginine 232 contribute to the D-glyceraldehyde 3-phosphate site; these read SCT and TG. Cysteine 150 serves as the catalytic Nucleophile. Asparagine 314 lines the NAD(+) pocket.

It belongs to the glyceraldehyde-3-phosphate dehydrogenase family. As to quaternary structure, homotetramer.

The protein localises to the cytoplasm. It catalyses the reaction D-glyceraldehyde 3-phosphate + phosphate + NAD(+) = (2R)-3-phospho-glyceroyl phosphate + NADH + H(+). The protein operates within carbohydrate degradation; glycolysis; pyruvate from D-glyceraldehyde 3-phosphate: step 1/5. Functionally, catalyzes the oxidative phosphorylation of glyceraldehyde 3-phosphate (G3P) to 1,3-bisphosphoglycerate (BPG) using the cofactor NAD. The first reaction step involves the formation of a hemiacetal intermediate between G3P and a cysteine residue, and this hemiacetal intermediate is then oxidized to a thioester, with concomitant reduction of NAD to NADH. The reduced NADH is then exchanged with the second NAD, and the thioester is attacked by a nucleophilic inorganic phosphate to produce BPG. The sequence is that of Glyceraldehyde-3-phosphate dehydrogenase (gap) from Chlamydia trachomatis serovar L2 (strain ATCC VR-902B / DSM 19102 / 434/Bu).